We begin with the raw amino-acid sequence, 152 residues long: Large ribosomal subunit protein bL9 (152 aa).

This sequence belongs to the bacterial ribosomal protein bL9 family.

Binds to the 23S rRNA. This is Large ribosomal subunit protein bL9 from Prochlorococcus marinus (strain MIT 9211).